The sequence spans 239 residues: THAP domain-containing protein 3 (239 aa).

Residues 1 to 82 (MPKSCAARQC…LKHNAVPTVF (82 aa)) form a THAP-type zinc finger. Residues 84-177 (FQDPTQQVRE…RRTPNKQPSD (94 aa)) form a disordered region. Ser-122 carries the phosphoserine modification. Positions 177–180 (DHSY) match the HCFC1-binding motif (HBM) motif.

In terms of assembly, component of a THAP1/THAP3-HCFC1-OGT complex that contains at least, either THAP1 or THAP3, HCFC1 and OGT. Interacts directly with OGT and HCFC1 (via its HBM). In terms of tissue distribution, highly expressed in heart, skeletal muscle and placenta. Weaker expression in brain, kidney and liver.

In terms of biological role, component of a THAP1/THAP3-HCFC1-OGT complex that is required for the regulation of the transcriptional activity of RRM1. This Homo sapiens (Human) protein is THAP domain-containing protein 3 (THAP3).